Consider the following 431-residue polypeptide: Adenylosuccinate lyase (431 aa).

N(6)-(1,2-dicarboxyethyl)-AMP-binding positions include 4–5 (RY), 67–69 (RHD), and 93–94 (TS). The active-site Proton donor/acceptor is H141. Q212 contacts N(6)-(1,2-dicarboxyethyl)-AMP. S262 functions as the Proton donor/acceptor in the catalytic mechanism. N(6)-(1,2-dicarboxyethyl)-AMP is bound by residues S263, 268 to 270 (KRN), N276, and 307 to 311 (SAERI).

The protein belongs to the lyase 1 family. Adenylosuccinate lyase subfamily. As to quaternary structure, homodimer and homotetramer. Residues from neighboring subunits contribute catalytic and substrate-binding residues to each active site.

It carries out the reaction N(6)-(1,2-dicarboxyethyl)-AMP = fumarate + AMP. The enzyme catalyses (2S)-2-[5-amino-1-(5-phospho-beta-D-ribosyl)imidazole-4-carboxamido]succinate = 5-amino-1-(5-phospho-beta-D-ribosyl)imidazole-4-carboxamide + fumarate. It functions in the pathway purine metabolism; AMP biosynthesis via de novo pathway; AMP from IMP: step 2/2. It participates in purine metabolism; IMP biosynthesis via de novo pathway; 5-amino-1-(5-phospho-D-ribosyl)imidazole-4-carboxamide from 5-amino-1-(5-phospho-D-ribosyl)imidazole-4-carboxylate: step 2/2. Functionally, catalyzes two reactions in de novo purine nucleotide biosynthesis. Catalyzes the breakdown of 5-aminoimidazole- (N-succinylocarboxamide) ribotide (SAICAR or 2-[5-amino-1-(5-phospho-beta-D-ribosyl)imidazole-4-carboxamido]succinate) to 5-aminoimidazole-4-carboxamide ribotide (AICAR or 5-amino-1-(5-phospho-beta-D-ribosyl)imidazole-4-carboxamide) and fumarate, and of adenylosuccinate (ADS or N(6)-(1,2-dicarboxyethyl)-AMP) to adenosine monophosphate (AMP) and fumarate. In Staphylococcus epidermidis (strain ATCC 35984 / DSM 28319 / BCRC 17069 / CCUG 31568 / BM 3577 / RP62A), this protein is Adenylosuccinate lyase (purB).